Consider the following 1050-residue polypeptide: Diacylglycerol kinase iota (1050 aa).

3 disordered regions span residues 53-74 (PSSS…GSGA), 92-111 (AAAA…EKEE), and 328-356 (SLKA…ETKG). The segment covering 92–105 (AAAAAALEEPAAAG) has biased composition (low complexity). Residues 332–347 (SNRKKKRTSFKRKASK) are compositionally biased toward basic residues. In terms of domain architecture, DAGKc spans 367–502 (PLMKPLLVFV…DRWNLHVERN (136 aa)). ANK repeat units follow at residues 943–972 (GHCS…AELL) and 979–1008 (TGET…SLRQ). A PDZ-binding motif is present at residues 1048-1050 (TAV).

The protein belongs to the eukaryotic diacylglycerol kinase family. As to quaternary structure, interacts (via PDZ-binding motif) with DLG4; controls the localization of DGKI to the synapse. Interacts (via PDZ-binding motif) with DLG1. Interacts (via PDZ-binding motif) with DLG2. Interacts (via PDZ-binding motif) with DLG3. May interact with RASGRP3; involved in the regulation of RASGRP3 activity. In brain, expressed in the hippocampus and cerebellum with stronger expression in the Purkinje cell layer (at protein level). Expressed in kidney.

Its subcellular location is the cell projection. The protein resides in the axon. It is found in the dendrite. The protein localises to the presynapse. It localises to the postsynapse. Its subcellular location is the postsynaptic density. The protein resides in the synaptic cell membrane. It is found in the cytoplasmic vesicle. The protein localises to the secretory vesicle. It localises to the synaptic vesicle membrane. Its subcellular location is the cytoplasm. The protein resides in the cytosol. It is found in the nucleus. It carries out the reaction a 1,2-diacyl-sn-glycerol + ATP = a 1,2-diacyl-sn-glycero-3-phosphate + ADP + H(+). The catalysed reaction is 1,2-di-(9Z-octadecenoyl)-sn-glycerol + ATP = 1,2-di-(9Z-octadecenoyl)-sn-glycero-3-phosphate + ADP + H(+). The enzyme catalyses 1-octadecanoyl-2-(5Z,8Z,11Z,14Z-eicosatetraenoyl)-sn-glycerol + ATP = 1-octadecanoyl-2-(5Z,8Z,11Z,14Z-eicosatetraenoyl)-sn-glycero-3-phosphate + ADP + H(+). It catalyses the reaction 1-octadecanoyl-2-(9Z,12Z)-octadecadienoyl-sn-glycerol + ATP = 1-octadecanoyl-2-(9Z,12Z-octadecadienoyl)-sn-glycero-3-phosphate + ADP + H(+). Its pathway is lipid metabolism; glycerolipid metabolism. In terms of biological role, diacylglycerol kinase that converts diacylglycerol/DAG into phosphatidic acid/phosphatidate/PA and regulates the respective levels of these two bioactive lipids. Thereby, acts as a central switch between the signaling pathways activated by these second messengers with different cellular targets and opposite effects in numerous biological processes. Has probably no preference for any of the diacylglycerols in terms of the acyl chain composition, especially for the acyl chain at the sn-2 position. By controlling the diacylglycerol/DAG-mediated activation of RASGRP3, negatively regulates the Rap1 signaling pathway. May play a role in presynaptic diacylglycerol/DAG signaling and control neurotransmitter release during metabotropic glutamate receptor-dependent long-term depression. The sequence is that of Diacylglycerol kinase iota from Mus musculus (Mouse).